The sequence spans 236 residues: 4-hydroxy-tetrahydrodipicolinate reductase (236 aa).

NAD(+) is bound by residues 11 to 16 (GASGRM), 92 to 94 (GTT), and 116 to 119 (GSNF). H148 (proton donor/acceptor) is an active-site residue. Residue H149 participates in (S)-2,3,4,5-tetrahydrodipicolinate binding. Catalysis depends on K152, which acts as the Proton donor. 158 to 159 (GS) contacts (S)-2,3,4,5-tetrahydrodipicolinate.

This sequence belongs to the DapB family.

It is found in the cytoplasm. It catalyses the reaction (S)-2,3,4,5-tetrahydrodipicolinate + NAD(+) + H2O = (2S,4S)-4-hydroxy-2,3,4,5-tetrahydrodipicolinate + NADH + H(+). It carries out the reaction (S)-2,3,4,5-tetrahydrodipicolinate + NADP(+) + H2O = (2S,4S)-4-hydroxy-2,3,4,5-tetrahydrodipicolinate + NADPH + H(+). It participates in amino-acid biosynthesis; L-lysine biosynthesis via DAP pathway; (S)-tetrahydrodipicolinate from L-aspartate: step 4/4. In terms of biological role, catalyzes the conversion of 4-hydroxy-tetrahydrodipicolinate (HTPA) to tetrahydrodipicolinate. This Xylella fastidiosa (strain M23) protein is 4-hydroxy-tetrahydrodipicolinate reductase.